The chain runs to 299 residues: Peroxisomal biogenesis factor 19 (299 aa).

The segment at 1–63 is disordered; the sequence is MAAAEGDGGV…SPGDTAKDAL (63 aa). The residue at position 2 (Ala-2) is an N-acetylalanine. The segment at 2 to 56 is docking to the peroxisome membrane and binding to PEX3; the sequence is AAAEGDGGVRAEADRELEELLESALDDFDKAKPSPAPPPTTTAPDASGPQKRSPG. Positions 2–91 are necessary for PEX19 function on peroxisome biogenesis; it reads AAAEGDGGVR…QATAEFEKAM (90 aa). Over residues 16–27 the composition is skewed to acidic residues; it reads RELEELLESALD. 3 positions are modified to phosphoserine: Ser-35, Ser-54, and Ser-66. At Thr-236 the chain carries Phosphothreonine. A Cysteine methyl ester modification is found at Cys-296. Cys-296 is lipidated: S-farnesyl cysteine. Residues 297-299 constitute a propeptide, removed in mature form; sequence LIM.

Belongs to the peroxin-19 family. As to quaternary structure, interacts with a broad range of peroxisomal membrane proteins, including PEX3, PEX10, PEX11A, PEX11B, PEX12, PEX13, PEX14 and PEX16, PXMP2/PMP22, PXMP4/PMP24, SLC25A17/PMP34, ABCD1/ALDP, ABCD2/ALDRP, and ABCD3/PMP70. Also interacts with the tumor suppressor CDKN2A/p19ARF.

It localises to the cytoplasm. It is found in the peroxisome membrane. Functionally, necessary for early peroxisomal biogenesis. Acts both as a cytosolic chaperone and as an import receptor for peroxisomal membrane proteins (PMPs). Binds and stabilizes newly synthesized PMPs in the cytoplasm by interacting with their hydrophobic membrane-spanning domains, and targets them to the peroxisome membrane by binding to the integral membrane protein PEX3. Excludes CDKN2A from the nucleus and prevents its interaction with MDM2, which results in active degradation of TP53. The sequence is that of Peroxisomal biogenesis factor 19 (PEX19) from Bos taurus (Bovine).